Reading from the N-terminus, the 2193-residue chain is Genome polyprotein (2193 aa).

Positions 1 to 22 are disordered; the sequence is MGSQVSTQRSGSHENSNSASEG. The N-myristoyl glycine; by host moiety is linked to residue Gly-2. Residues 2–1503 lie on the Cytoplasmic side of the membrane; sequence GSQVSTQRSG…HLNRAVLIMQ (1502 aa). Amphipathic alpha-helix regions lie at residues 566–588 and 568–588; these read GDGIADMIDQAVTSRVGRALTSL and GIADMIDQAVTSRVGRALTSL. Active-site for protease 2A activity residues include His-883 and Asp-901. Cys-918 and Cys-920 together coordinate Zn(2+). Cys-972 serves as the catalytic For protease 2A activity. Zn(2+) contacts are provided by Cys-978 and His-980. Residues 1112–1184 are membrane-binding; it reads SASWLKKFND…EQSAASQEDL (73 aa). The interval 1112 to 1250 is oligomerization; the sequence is SASWLKKFND…SPGTGKSLAT (139 aa). The interval 1133 to 1137 is RNA-binding; that stretch reads SNKIS. The region spanning 1216 to 1374 is the SF3 helicase domain; that stretch reads EKRMNNYMQF…YKTDLGRLDA (159 aa). Position 1240–1247 (1240–1247) interacts with ATP; it reads GSPGTGKS. Cys-1381, Cys-1392, and Cys-1397 together coordinate Zn(2+). The segment at 1381-1397 adopts a C4-type; degenerate zinc-finger fold; sequence CSENNTANFKRCSPLVC. The segment at 1424–1431 is RNA-binding; that stretch reads EYNNRYAI. Positions 1435–1440 are oligomerization; sequence IEALFQ. Residues 1504–1519 lie within the membrane without spanning it; sequence SIATVVAVVSLVYVIY. The Cytoplasmic portion of the chain corresponds to 1520–2193; sequence KLFAGFQGAY…NLRRNWLELF (674 aa). Tyr-1529 is subject to O-(5'-phospho-RNA)-tyrosine. The 179-residue stretch at 1549-1727 folds into the Peptidase C3 domain; it reads GPSLDFALSL…FCAGLKRSYF (179 aa). Catalysis depends on for protease 3C activity residues His-1588, Glu-1619, and Cys-1695. In terms of domain architecture, RdRp catalytic spans 1958–2073; it reads GSLFAFDYSG…ASYPFPIDCL (116 aa). Mg(2+) contacts are provided by Asp-1964 and Asp-2060.

This sequence belongs to the picornaviruses polyprotein family. As to quaternary structure, interacts with capsid protein VP1 and capsid protein VP3 to form heterotrimeric protomers. Interacts with capsid protein VP0, and capsid protein VP3 to form heterotrimeric protomers. Five protomers subsequently associate to form pentamers which serve as building blocks for the capsid. Interacts with capsid protein VP2, capsid protein VP3 and capsid protein VP4 following cleavage of capsid protein VP0. In terms of assembly, interacts with capsid protein VP1 and capsid protein VP3 in the mature capsid. As to quaternary structure, interacts with capsid protein VP0 and capsid protein VP1 to form heterotrimeric protomers. Five protomers subsequently associate to form pentamers which serve as building blocks for the capsid. Interacts with capsid protein VP4 in the mature capsid. Interacts with protein 2C; this interaction may be important for virion morphogenesis. Interacts with capsid protein VP1 and capsid protein VP3. In terms of assembly, homodimer. As to quaternary structure, homohexamer; forms a hexameric ring structure with 6-fold symmetry characteristic of AAA+ ATPases. Interacts (via N-terminus) with host RTN3 (via reticulon domain); this interaction is important for viral replication. Interacts with capsid protein VP3; this interaction may be important for virion morphogenesis. Interacts with protein 3CD. In terms of assembly, homodimer. Interacts with host GBF1. Interacts (via GOLD domain) with host ACBD3 (via GOLD domain); this interaction allows the formation of a viral protein 3A/ACBD3 heterotetramer with a 2:2 stoichiometry, which will stimulate the recruitment of host PI4KB in order to synthesize PI4P at the viral RNA replication sites. As to quaternary structure, interacts with RNA-directed RNA polymerase. Interacts with host IFIH1/MDA5; this interaction inhibits host IFIH1. In terms of assembly, interacts with protein 3AB and with RNA-directed RNA polymerase. As to quaternary structure, interacts with Viral protein genome-linked and with protein 3CD. Mg(2+) is required as a cofactor. In terms of processing, specific enzymatic cleavages in vivo by the viral proteases yield processing intermediates and the mature proteins. Myristoylation is required for the formation of pentamers during virus assembly. Further assembly of 12 pentamers and a molecule of genomic RNA generates the provirion. Post-translationally, during virion maturation, immature virions are rendered infectious following cleavage of VP0 into VP4 and VP2. This maturation seems to be an autocatalytic event triggered by the presence of RNA in the capsid and it is followed by a conformational change infectious virion. In terms of processing, myristoylation is required during RNA encapsidation and formation of the mature virus particle. VPg is uridylylated by the polymerase into VPg-pUpU. This acts as a nucleotide-peptide primer for the genomic RNA replication.

It is found in the virion. Its subcellular location is the host cytoplasm. The protein resides in the host cytoplasmic vesicle membrane. The protein localises to the host nucleus. The catalysed reaction is a ribonucleoside 5'-triphosphate + H2O = a ribonucleoside 5'-diphosphate + phosphate + H(+). The enzyme catalyses Selective cleavage of Tyr-|-Gly bond in the picornavirus polyprotein.. It carries out the reaction RNA(n) + a ribonucleoside 5'-triphosphate = RNA(n+1) + diphosphate. It catalyses the reaction Selective cleavage of Gln-|-Gly bond in the poliovirus polyprotein. In other picornavirus reactions Glu may be substituted for Gln, and Ser or Thr for Gly.. With respect to regulation, replication or transcription is subject to high level of random mutations by the nucleotide analog ribavirin. Its function is as follows. Forms an icosahedral capsid of pseudo T=3 symmetry with capsid proteins VP2 and VP3. The capsid is 300 Angstroms in diameter, composed of 60 copies of each capsid protein and enclosing the viral positive strand RNA genome. Capsid protein VP1 mainly forms the vertices of the capsid. Capsid protein VP1 interacts with host cell receptor to provide virion attachment to target host cells. This attachment induces virion internalization. After binding to its receptor, the capsid undergoes conformational changes. Capsid protein VP1 N-terminus (that contains an amphipathic alpha-helix) and capsid protein VP4 are externalized. Together, they shape a pore in the host membrane through which viral genome is translocated to host cell cytoplasm. Forms an icosahedral capsid of pseudo T=3 symmetry with capsid proteins VP2 and VP3. The capsid is 300 Angstroms in diameter, composed of 60 copies of each capsid protein and enclosing the viral positive strand RNA genome. Functionally, lies on the inner surface of the capsid shell. After binding to the host receptor, the capsid undergoes conformational changes. Capsid protein VP4 is released, Capsid protein VP1 N-terminus is externalized, and together, they shape a pore in the host membrane through which the viral genome is translocated into the host cell cytoplasm. In terms of biological role, component of immature procapsids, which is cleaved into capsid proteins VP4 and VP2 after maturation. Allows the capsid to remain inactive before the maturation step. Its function is as follows. Cysteine protease that cleaves viral polyprotein and specific host proteins. It is responsible for the autocatalytic cleavage between the P1 and P2 regions, which is the first cleavage occurring in the polyprotein. Also cleaves the host translation initiation factor EIF4G1, in order to shut down the capped cellular mRNA translation. Inhibits the host nucleus-cytoplasm protein and RNA trafficking by cleaving host members of the nuclear pores. Counteracts stress granule formation probably by antagonizing its assembly or promoting its dissassembly. Cleaves and inhibits host IFIH1/MDA5, thereby inhibiting the type-I IFN production and the establishment of the antiviral state. Cleaves and inhibits host MAVS, thereby inhibiting the type-I IFN production and the establishment of the antiviral state. Plays an essential role in the virus replication cycle by acting as a viroporin. Creates a pore in the host endoplasmic reticulum and as a consequence releases Ca2+ in the cytoplasm of infected cell. In turn, high levels of cytoplasmic calcium may trigger membrane trafficking and transport of viral ER-associated proteins to viroplasms, sites of viral genome replication. Functionally, induces and associates with structural rearrangements of intracellular membranes. Displays RNA-binding, nucleotide binding and NTPase activities. May play a role in virion morphogenesis and viral RNA encapsidation by interacting with the capsid protein VP3. In terms of biological role, localizes the viral replication complex to the surface of membranous vesicles. Together with protein 3CD binds the Cis-Active RNA Element (CRE) which is involved in RNA synthesis initiation. Acts as a cofactor to stimulate the activity of 3D polymerase, maybe through a nucleid acid chaperone activity. Its function is as follows. Localizes the viral replication complex to the surface of membranous vesicles. It inhibits host cell endoplasmic reticulum-to-Golgi apparatus transport and causes the disassembly of the Golgi complex, possibly through GBF1 interaction. This would result in depletion of MHC, trail receptors and IFN receptors at the host cell surface. Plays an essential role in viral RNA replication by recruiting ACBD3 and PI4KB at the viral replication sites, thereby allowing the formation of the rearranged membranous structures where viral replication takes place. Acts as a primer for viral RNA replication and remains covalently bound to viral genomic RNA. VPg is uridylylated prior to priming replication into VPg-pUpU. The oriI viral genomic sequence may act as a template for this. The VPg-pUpU is then used as primer on the genomic RNA poly(A) by the RNA-dependent RNA polymerase to replicate the viral genome. During genome replication, the VPg-RNA linkage is removed by the host TDP2, thereby accelerating replication. During the late stage of the replication cycle, host TDP2 is excluded from sites of viral RNA synthesis and encapsidation, allowing for the generation of progeny virions. Functionally, involved in the viral replication complex and viral polypeptide maturation. It exhibits protease activity with a specificity and catalytic efficiency that is different from protease 3C. Protein 3CD lacks polymerase activity. Protein 3CD binds to the 5'UTR of the viral genome. In terms of biological role, major viral protease that mediates proteolytic processing of the polyprotein. Cleaves host EIF5B, contributing to host translation shutoff. Also cleaves host PABPC1, contributing to host translation shutoff. Binds and inhibits host IFIH1/MDA5, thereby inhibiting the type-I IFN production and the establishment of the antiviral state. Cleaves host MAP3K7/TAK1, resulting in inhibition of TRAF6-triggered NF-kappa-B induction. Cleaves host NLRP1, triggers host N-glycine-mediated degradation of the autoinhibitory NLRP1 N-terminal fragment. Its function is as follows. Replicates the viral genomic RNA on the surface of intracellular membranes. May form linear arrays of subunits that propagate along a strong head-to-tail interaction called interface-I. Covalently attaches UMP to a tyrosine of VPg, which is used to prime RNA synthesis. The positive stranded RNA genome is first replicated at virus induced membranous vesicles, creating a dsRNA genomic replication form. This dsRNA is then used as template to synthesize positive stranded RNA genomes. ss(+)RNA genomes are either translated, replicated or encapsidated. This Homo sapiens (Human) protein is Genome polyprotein.